The primary structure comprises 449 residues: Glycerol-3-phosphate acyltransferase 3 (449 aa).

Helical transmembrane passes span 9–29 (FVLL…PAMF), 146–166 (ISVR…CVLL), and 170–190 (ITLA…VGFL). Positions 238–243 (HTSPID) match the HXXXXD motif motif. The helical transmembrane segment at 358 to 378 (MVSYILRMMTSWAIVCNVWYL) threads the bilayer.

Belongs to the 1-acyl-sn-glycerol-3-phosphate acyltransferase family.

The protein resides in the endoplasmic reticulum membrane. The catalysed reaction is sn-glycerol 3-phosphate + an acyl-CoA = a 1-acyl-sn-glycero-3-phosphate + CoA. It catalyses the reaction a 1-acyl-sn-glycero-3-phosphate + an acyl-CoA = a 1,2-diacyl-sn-glycero-3-phosphate + CoA. The enzyme catalyses dodecanoyl-CoA + sn-glycerol 3-phosphate = 1-dodecanoyl-sn-glycerol 3-phosphate + CoA. It carries out the reaction sn-glycerol 3-phosphate + hexadecanoyl-CoA = 1-hexadecanoyl-sn-glycero-3-phosphate + CoA. The catalysed reaction is sn-glycerol 3-phosphate + (9Z)-octadecenoyl-CoA = 1-(9Z-octadecenoyl)-sn-glycero-3-phosphate + CoA. It catalyses the reaction (9Z,12Z)-octadecadienoyl-CoA + sn-glycerol 3-phosphate = 1-(9Z,12Z)-octadecadienoyl-sn-glycero-3-phosphate + CoA. The enzyme catalyses 1-tetradecanoyl-sn-glycerol 3-phosphate + (9Z)-octadecenoyl-CoA = 1-tetradecanoyl-2-(9Z)-octadecenoyl-sn-glycero-3-phosphate + CoA. It carries out the reaction 1-hexadecanoyl-sn-glycero-3-phosphate + (9Z)-octadecenoyl-CoA = 1-hexadecanoyl-2-(9Z-octadecenoyl)-sn-glycero-3-phosphate + CoA. The catalysed reaction is 1-(9Z-octadecenoyl)-sn-glycero-3-phosphate + (9Z)-octadecenoyl-CoA = 1,2-di-(9Z-octadecenoyl)-sn-glycero-3-phosphate + CoA. It catalyses the reaction 1-(6Z,9Z,12Z-octadecatrienoyl)-sn-glycero-3-phosphate + (9Z)-octadecenoyl-CoA = (6Z,9Z,12Z)-octadecatrienoyl-2-(9Z)-octadecenoyl-sn-glycero-3-phosphate + CoA. The enzyme catalyses 1-(9Z,12Z,15Z)-octadecatrienoyl-sn-glycero-3-phosphate + (9Z)-octadecenoyl-CoA = 1-(9Z,12Z,15Z)-octadecatrienoyl-2-(9Z)-octadecenoyl-sn-glycero-3-phosphate + CoA. It carries out the reaction 1-(9Z-octadecenoyl)-sn-glycero-3-phosphate + tetradecanoyl-CoA = 1-(9Z)-octadecenoyl-2-tetradecanoyl-sn-glycero-3-phosphate + CoA. The catalysed reaction is 1-(9Z-octadecenoyl)-sn-glycero-3-phosphate + hexadecanoyl-CoA = 1-(9Z)-octadecenoyl-2-hexadecanoyl-sn-glycero-3-phosphate + CoA. It catalyses the reaction 1-(9Z-octadecenoyl)-sn-glycero-3-phosphate + octadecanoyl-CoA = 1-(9Z-octadecenoyl)-2-octadecanoyl-sn-glycero-3-phosphate + CoA. The enzyme catalyses 1-(9Z-octadecenoyl)-sn-glycero-3-phosphate + (9Z,12Z)-octadecadienoyl-CoA = 1-(9Z)-octadecenoyl-2-(9Z,12Z)-octadecadienoyl-sn-glycero-3-phosphate + CoA. It carries out the reaction 1-(5Z,8Z,11Z,14Z-eicosatetraenoyl)-sn-glycero-3-phosphate + (9Z)-octadecenoyl-CoA = 1-(5Z,8Z,11Z,14Z)-eicosatetraenoyl-2-(9Z)-octadecenoyl-sn-glycero-3-phosphate + CoA. Its pathway is glycerolipid metabolism; triacylglycerol biosynthesis. It participates in phospholipid metabolism; CDP-diacylglycerol biosynthesis; CDP-diacylglycerol from sn-glycerol 3-phosphate: step 1/3. Converts glycerol-3-phosphate to 1-acyl-sn-glycerol-3-phosphate (lysophosphatidic acid or LPA) by incorporating an acyl moiety at the sn-1 position of the glycerol backbone. Also converts LPA into 1,2-diacyl-sn-glycerol-3-phosphate (phosphatidic acid or PA) by incorporating an acyl moiety at the sn-2 position of the glycerol backbone. Protects cells against lipotoxicity. The protein is Glycerol-3-phosphate acyltransferase 3 of Danio rerio (Zebrafish).